Consider the following 57-residue polypeptide: Sperm histone (57 aa).

A disordered region spans residues 1 to 57 (MARYRRTRTRSRSRRRRRSRRRRSSRRRRYGRSRRSYRSVGRRRRRYGRRRRRRRRY). The residue at position 9 (T9) is a Phosphothreonine.

It belongs to the protamine P1 family. As to expression, testis.

It is found in the nucleus. It localises to the chromosome. Its function is as follows. Protamines substitute for histones in the chromatin of sperm during the haploid phase of spermatogenesis. They compact sperm DNA into a highly condensed, stable and inactive complex. The chain is Sperm histone from Coturnix japonica (Japanese quail).